A 239-amino-acid chain; its full sequence is Increased recombination centers protein 22-1 (239 aa).

A signal peptide spans 1 to 19 (MKLSTIFTAFAATIATVAG). The Lumenal portion of the chain corresponds to 20-161 (YETTGSKQTV…AAVSFFDPRL (142 aa)). Residues 162–182 (IFLELVLLITFAGLIYVGYEI) form a helical membrane-spanning segment. At 183–239 (WGKQYFKGVAPVKAKKVSAAKASSPVASGPSTTSATGYDTNWIPESHLKQKKTKKVN) the chain is on the cytoplasmic side. Over residues 201 to 213 (AAKASSPVASGPS) the composition is skewed to low complexity. The disordered stretch occupies residues 201–222 (AAKASSPVASGPSTTSATGYDT).

This sequence belongs to the IRC22 family.

The protein resides in the endoplasmic reticulum membrane. Its function is as follows. Is probably involved in a pathway contributing to genomic integrity. This is Increased recombination centers protein 22-1 (IRC22-1) from Candida albicans (strain SC5314 / ATCC MYA-2876) (Yeast).